A 419-amino-acid polypeptide reads, in one-letter code: Zinc finger protein Pegasus (419 aa).

A Glycyl lysine isopeptide (Lys-Gly) (interchain with G-Cter in SUMO2) cross-link involves residue lysine 5. C2H2-type zinc fingers lie at residues 82–104, 110–132, and 138–161; these read LKCR…IRIH, HRCH…MRSH, and YKCE…RRKH. A Glycyl lysine isopeptide (Lys-Gly) (interchain with G-Cter in SUMO2) cross-link involves residue lysine 185. Polar residues-rich tracts occupy residues 223 to 236 and 262 to 273; these read QTDS…TTPT and LSSLPPENQNPA. Disordered regions lie at residues 223–247 and 262–356; these read QTDS…QELM and LSSL…PALP. Residues 290 to 311 show a composition bias toward low complexity; sequence QPSTQAVVSAVSASIPQSSSPT. Positions 332–349 are enriched in polar residues; that stretch reads SEPSAHTSTPSIGNSQPS. C2H2-type zinc fingers lie at residues 364–386 and 392–416; these read HHCQ…MGCH and FQCN…RGQH.

It belongs to the Ikaros C2H2-type zinc-finger protein family. As to quaternary structure, self-associates. Interacts with other family members; IKZF1, IKZF2, IKZF3 and IKZF4. As to expression, expressed in brain, heart, skeletal muscle, kidney, and liver. Expressed in the hematopoietic cell lines MOLT-4, NALM-6 and K-562. Highly expressed in THP-1 and M-07e cell lines, which have characteristics of myeloid and early megakaryocytic cells respectively.

It is found in the nucleus. Its function is as follows. Transcriptional repressor that binds the core 5'GNNTGTNG-3' DNA consensus sequence. Involved in megakaryocyte differentiation. This is Zinc finger protein Pegasus (IKZF5) from Homo sapiens (Human).